Reading from the N-terminus, the 137-residue chain is Ribosome-binding factor A (137 aa).

The disordered stretch occupies residues 114–137 (QLIDEARAEDRELRPEDDETGNNE). Basic and acidic residues predominate over residues 117–127 (DEARAEDRELR). Acidic residues predominate over residues 128 to 137 (PEDDETGNNE).

The protein belongs to the RbfA family. Monomer. Binds 30S ribosomal subunits, but not 50S ribosomal subunits or 70S ribosomes.

It localises to the cytoplasm. In terms of biological role, one of several proteins that assist in the late maturation steps of the functional core of the 30S ribosomal subunit. Associates with free 30S ribosomal subunits (but not with 30S subunits that are part of 70S ribosomes or polysomes). Required for efficient processing of 16S rRNA. May interact with the 5'-terminal helix region of 16S rRNA. In Alcanivorax borkumensis (strain ATCC 700651 / DSM 11573 / NCIMB 13689 / SK2), this protein is Ribosome-binding factor A.